Here is a 465-residue protein sequence, read N- to C-terminus: tRNA modification GTPase MnmE (465 aa).

(6S)-5-formyl-5,6,7,8-tetrahydrofolate contacts are provided by Arg25, Glu87, and Arg126. Residues 222–386 (TIRVVLRGLP…LIERLVQFAE (165 aa)) enclose the TrmE-type G domain. Residues 232–237 (NAGKSR), 251–257 (TDQAGTT), and 276–279 (DTAG) contribute to the GTP site. Positions 236 and 257 each coordinate Mg(2+). A (6S)-5-formyl-5,6,7,8-tetrahydrofolate-binding site is contributed by Lys465.

The protein belongs to the TRAFAC class TrmE-Era-EngA-EngB-Septin-like GTPase superfamily. TrmE GTPase family. In terms of assembly, homodimer. Heterotetramer of two MnmE and two MnmG subunits. The cofactor is K(+).

The protein localises to the cytoplasm. In terms of biological role, exhibits a very high intrinsic GTPase hydrolysis rate. Involved in the addition of a carboxymethylaminomethyl (cmnm) group at the wobble position (U34) of certain tRNAs, forming tRNA-cmnm(5)s(2)U34. In Rhodopirellula baltica (strain DSM 10527 / NCIMB 13988 / SH1), this protein is tRNA modification GTPase MnmE.